The following is a 315-amino-acid chain: MDGVVIKNTGSQYLVRCTDGTELYCMAKGNLRLKGIRSTNPVAVGDRVEIVPASQDGQPAYIKRIHPRRNYIIRRASNLSKESHILGANLDAAVLVCTINDPVTTTVFIDRFLATAEAYRVPVILAFNKIDCYTQEDRLQLDRLSAVYTAIGYPCCHVSAITGEGLPDLKSLLDGKLTLLAGHSGVGKSSLINALIPHADLRTGAISQAHHTGMHTTTFSQMIDFPDLSPGSALIDTPGIKGFGTLEMGEYEVSHYFPEIFAASKGCRFGNCTHTHEPGCAVLEALRRGEIAESRYISYLSILEDENAERYRPEY.

The region spanning 79-243 is the CP-type G domain; that stretch reads LSKESHILGA…LIDTPGIKGF (165 aa). GTP contacts are provided by residues 128-131 and 182-190; these read NKID and GHSGVGKSS. Positions 267, 272, 274, and 280 each coordinate Zn(2+).

The protein belongs to the TRAFAC class YlqF/YawG GTPase family. RsgA subfamily. In terms of assembly, monomer. Associates with 30S ribosomal subunit, binds 16S rRNA. Zn(2+) is required as a cofactor.

Its subcellular location is the cytoplasm. Its function is as follows. One of several proteins that assist in the late maturation steps of the functional core of the 30S ribosomal subunit. Helps release RbfA from mature subunits. May play a role in the assembly of ribosomal proteins into the subunit. Circularly permuted GTPase that catalyzes slow GTP hydrolysis, GTPase activity is stimulated by the 30S ribosomal subunit. The chain is Small ribosomal subunit biogenesis GTPase RsgA from Porphyromonas gingivalis (strain ATCC 33277 / DSM 20709 / CIP 103683 / JCM 12257 / NCTC 11834 / 2561).